Consider the following 502-residue polypeptide: Cobyric acid synthase (502 aa).

Residues 260 to 433 (ILRVAVCAIP…WHGSLESDGF (174 aa)) form the GATase cobBQ-type domain. Cys341 acts as the Nucleophile in catalysis. His425 is an active-site residue.

This sequence belongs to the CobB/CobQ family. CobQ subfamily.

It participates in cofactor biosynthesis; adenosylcobalamin biosynthesis. Functionally, catalyzes amidations at positions B, D, E, and G on adenosylcobyrinic A,C-diamide. NH(2) groups are provided by glutamine, and one molecule of ATP is hydrogenolyzed for each amidation. The sequence is that of Cobyric acid synthase from Streptomyces avermitilis (strain ATCC 31267 / DSM 46492 / JCM 5070 / NBRC 14893 / NCIMB 12804 / NRRL 8165 / MA-4680).